The primary structure comprises 207 residues: Cytochrome c biogenesis ATP-binding export protein CcmA (207 aa).

The ABC transporter domain maps to 3 to 206; the sequence is LMAEGLSARR…AKSLEMTGFV (204 aa). 35–42 is a binding site for ATP; that stretch reads GPNGAGKS.

This sequence belongs to the ABC transporter superfamily. CcmA exporter (TC 3.A.1.107) family. As to quaternary structure, the complex is composed of two ATP-binding proteins (CcmA) and two transmembrane proteins (CcmB).

It localises to the cell inner membrane. It carries out the reaction heme b(in) + ATP + H2O = heme b(out) + ADP + phosphate + H(+). Part of the ABC transporter complex CcmAB involved in the biogenesis of c-type cytochromes; once thought to export heme, this seems not to be the case, but its exact role is uncertain. Responsible for energy coupling to the transport system. The chain is Cytochrome c biogenesis ATP-binding export protein CcmA from Rhizobium meliloti (strain 1021) (Ensifer meliloti).